The primary structure comprises 498 residues: Glycerol kinase (498 aa).

Position 12 (Thr-12) interacts with ADP. The ATP site is built by Thr-12, Thr-13, and Ser-14. Residue Thr-12 coordinates sn-glycerol 3-phosphate. An ADP-binding site is contributed by Arg-16. 4 residues coordinate sn-glycerol 3-phosphate: Arg-82, Glu-83, Tyr-134, and Asp-243. Positions 82, 83, 134, 243, and 244 each coordinate glycerol. ADP-binding residues include Thr-265 and Gly-308. Residues Thr-265, Gly-308, Gln-312, and Gly-409 each contribute to the ATP site. ADP is bound by residues Gly-409 and Asn-413.

Belongs to the FGGY kinase family. Homotetramer and homodimer (in equilibrium).

The enzyme catalyses glycerol + ATP = sn-glycerol 3-phosphate + ADP + H(+). It functions in the pathway polyol metabolism; glycerol degradation via glycerol kinase pathway; sn-glycerol 3-phosphate from glycerol: step 1/1. Activated by phosphorylation and inhibited by fructose 1,6-bisphosphate (FBP). Key enzyme in the regulation of glycerol uptake and metabolism. Catalyzes the phosphorylation of glycerol to yield sn-glycerol 3-phosphate. The sequence is that of Glycerol kinase from Clostridium botulinum (strain Okra / Type B1).